A 435-amino-acid chain; its full sequence is Adenylosuccinate synthetase (435 aa).

Residues 22–28 (GDEGKGK) and 50–52 (GHT) each bind GTP. Asp-23 (proton acceptor) is an active-site residue. Mg(2+) is bound by residues Asp-23 and Gly-50. Residues 23–26 (DEGK), 48–51 (NAGH), Thr-140, Arg-154, Gln-235, Thr-250, and Arg-314 contribute to the IMP site. The active-site Proton donor is His-51. Residue 310–316 (ATTGRKR) coordinates substrate. GTP-binding positions include Arg-316, 342 to 344 (KLD), and 424 to 426 (SVG).

It belongs to the adenylosuccinate synthetase family. As to quaternary structure, homodimer. It depends on Mg(2+) as a cofactor.

The protein resides in the cytoplasm. It catalyses the reaction IMP + L-aspartate + GTP = N(6)-(1,2-dicarboxyethyl)-AMP + GDP + phosphate + 2 H(+). It participates in purine metabolism; AMP biosynthesis via de novo pathway; AMP from IMP: step 1/2. Functionally, plays an important role in the de novo pathway of purine nucleotide biosynthesis. Catalyzes the first committed step in the biosynthesis of AMP from IMP. In Chlorobaculum tepidum (strain ATCC 49652 / DSM 12025 / NBRC 103806 / TLS) (Chlorobium tepidum), this protein is Adenylosuccinate synthetase.